The sequence spans 498 residues: MKNKERKLKSWQGWLIFSSSMVVVFCLGLLAASVTERRAEIQSIYANKKDKIAPFEARNEMYRGNYPREYETWTYTADTSFRSEFNGSQAIDVLEQRPNMVIFWAGYAFSRDYTSPRGHMHAIQDMQRTLRTGNPGIDGAGDMQPATCWVCKSPDVPRMMQAIGVDEFYKNKWSSLGSDIVNPIGCADCHDPETMDLHISRPALIEAFQRRGLDITKASHQEMRSLVCAQCHVEYYFKGEGKYLTFPWDKGMTMEDAERYYDEAEYYDYIHTLSRAPILKAQHPDFEISQHGIHAQRGVSCADCHMPYISEGGVKFSDHHITSPLAHMDRTCQTCHRESEEELRKNVYERQRKANEVRNQLENELAKAHLEAQFAWDKGATEKEMTPILKYIRQSQWRWDYGVASHGASFHAPQEITRILSNGLERAMQARIEIARVLARHGYTDEVPLPDVSTKEKAQKYIGLDMDGLHKNKEKFLETVVPKWVKKAKGKGLLIAAK.

Residues Met-1–Ala-31 form the signal peptide. His-119 provides a ligand contact to heme c. 3 residues coordinate heme: Cys-148, Cys-151, and Lys-152. Heme c contacts are provided by Cys-186, Cys-189, His-190, Cys-228, Cys-231, and His-232. The Ca(2+) site is built by Glu-234, Tyr-235, Lys-280, and Gln-282. Tyr-235 provides a ligand contact to substrate. Residue His-283 coordinates substrate. 9 residues coordinate heme c: His-294, Cys-301, Cys-304, His-305, His-319, Cys-332, Cys-335, His-336, and His-411.

It belongs to the cytochrome c-552 family. The cofactor is Ca(2+). Requires heme c as cofactor.

It localises to the periplasm. It catalyses the reaction 6 Fe(III)-[cytochrome c] + NH4(+) + 2 H2O = 6 Fe(II)-[cytochrome c] + nitrite + 8 H(+). It participates in nitrogen metabolism; nitrate reduction (assimilation). Functionally, catalyzes the reduction of nitrite to ammonia, consuming six electrons in the process. This chain is Cytochrome c-552, found in Porphyromonas gingivalis (strain ATCC BAA-308 / W83).